The chain runs to 362 residues: Mannose-1-phosphate guanyltransferase (362 aa).

Belongs to the transferase hexapeptide repeat family.

The protein localises to the cytoplasm. It catalyses the reaction alpha-D-mannose 1-phosphate + GTP + H(+) = GDP-alpha-D-mannose + diphosphate. The protein operates within nucleotide-sugar biosynthesis; GDP-alpha-D-mannose biosynthesis; GDP-alpha-D-mannose from alpha-D-mannose 1-phosphate (GTP route): step 1/1. In terms of biological role, involved in cell wall synthesis where it is required for glycosylation. Involved in cell cycle progression through cell-size checkpoint. The sequence is that of Mannose-1-phosphate guanyltransferase (MPG1) from Debaryomyces hansenii (strain ATCC 36239 / CBS 767 / BCRC 21394 / JCM 1990 / NBRC 0083 / IGC 2968) (Yeast).